A 147-amino-acid chain; its full sequence is NADH-quinone oxidoreductase subunit A (147 aa).

3 consecutive transmembrane segments (helical) span residues F16–F36, F68–W88, and W97–L117.

This sequence belongs to the complex I subunit 3 family. In terms of assembly, NDH-1 is composed of 13 different subunits. Subunits NuoA, H, J, K, L, M, N constitute the membrane sector of the complex.

It is found in the cell inner membrane. It carries out the reaction a quinone + NADH + 5 H(+)(in) = a quinol + NAD(+) + 4 H(+)(out). NDH-1 shuttles electrons from NADH, via FMN and iron-sulfur (Fe-S) centers, to quinones in the respiratory chain. The immediate electron acceptor for the enzyme in this species is believed to be ubiquinone. Couples the redox reaction to proton translocation (for every two electrons transferred, four hydrogen ions are translocated across the cytoplasmic membrane), and thus conserves the redox energy in a proton gradient. The chain is NADH-quinone oxidoreductase subunit A from Salmonella paratyphi A (strain ATCC 9150 / SARB42).